A 383-amino-acid chain; its full sequence is Plant intracellular Ras-group-related LRR protein 8 (383 aa).

LRR repeat units follow at residues 56 to 79 (RQNI…SINL), 80 to 102 (ASIS…LVAR), 104 to 126 (LNLW…IGCL), 127 to 149 (SKLK…IEDC), 151 to 173 (SLEE…GFEL), 174 to 197 (TNLT…SYLT), 199 to 219 (LRVL…LENL), 221 to 244 (NLQV…VGLL), 245 to 268 (ISLV…GCLR), and 270 to 290 (IQKL…VVEQ). A GVYW; degenerate motif is present at residues 291–298 (GLEALKQY).

The protein belongs to the SHOC2 family. As to expression, widely expressed except flowers.

Functionally, leucine-rich repeat protein that likely mediates protein interactions, possibly in the context of signal transduction. This chain is Plant intracellular Ras-group-related LRR protein 8 (PIRL8), found in Arabidopsis thaliana (Mouse-ear cress).